Reading from the N-terminus, the 603-residue chain is Mitochondrial distribution and morphology protein 34 (603 aa).

The 205-residue stretch at 1 to 205 (MAFNFNWSPL…SPEYQEIETE (205 aa)) folds into the SMP-LTD domain. The span at 320 to 332 (KSGASSVASGSTG) shows a compositional bias: low complexity. Disordered stretches follow at residues 320–511 (KSGA…PLLR) and 558–603 (IARK…AYVA). Residues 333–351 (NETLSSRPTLASSYSTSAG) are compositionally biased toward polar residues. A compositionally biased stretch (basic and acidic residues) spans 371-380 (VVDLRRKDGA). The span at 383–403 (GVSTEANTPLPSTQVSDTSSV) shows a compositional bias: polar residues. The span at 452 to 463 (PLLAPAPLIPNA) shows a compositional bias: low complexity. Over residues 500 to 509 (RQAQQSTSPL) the composition is skewed to polar residues. Basic and acidic residues predominate over residues 558 to 570 (IARKVQEEKDKSS).

The protein belongs to the MDM34 family. Component of the ER-mitochondria encounter structure (ERMES) or MDM complex, composed of mmm1, mdm10, mdm12 and mdm34.

It localises to the mitochondrion outer membrane. Its function is as follows. Component of the ERMES/MDM complex, which serves as a molecular tether to connect the endoplasmic reticulum (ER) and mitochondria. Components of this complex are involved in the control of mitochondrial shape and protein biogenesis, and function in nonvesicular lipid trafficking between the ER and mitochondria. Mdm34 is required for the interaction of the ER-resident membrane protein mmm1 and the outer mitochondrial membrane-resident beta-barrel protein mdm10. The polypeptide is Mitochondrial distribution and morphology protein 34 (Pyrenophora tritici-repentis (strain Pt-1C-BFP) (Wheat tan spot fungus)).